A 306-amino-acid chain; its full sequence is MWKRWLALSLVTIALVHGEEEPRSKSKICANVFCGAGRECAVTEKGEPTCLCIEQCKPHKRPVCGSNGKTYLNHCELHRDACLTGSKIQVDYDGHCKEKKSASPSASPVVCYQANRDELRRRLIQWLEAEIIPDGWFSKGSNYSEILDKYFKSFDNGDSHLDSSEFLKFVEQNETAINITTYADQENNKLLRSLCVDALIELSDENADWKLSFQEFLKCLNPSFNPPEKKCALEDETYADGAETEVDCNRCVCSCGHWVCTAMTCDGKNQKGVQTHTEEEKTGYVQELQKHQGTAEKTKKVNTKEI.

Residues 1-18 (MWKRWLALSLVTIALVHG) form the signal peptide. Residues 28 to 51 (ICANVFCGAGRECAVTEKGEPTCL) form the Follistatin-like domain. Cystine bridges form between Cys-29–Cys-40, Cys-34–Cys-50, Cys-52–Cys-82, Cys-56–Cys-75, and Cys-64–Cys-96. The region spanning 46 to 98 (GEPTCLCIEQCKPHKRPVCGSNGKTYLNHCELHRDACLTGSKIQVDYDGHCKE) is the Kazal-like domain. An N-linked (GlcNAc...) asparagine glycan is attached at Asn-142. An EF-hand 1 domain is found at 142-176 (NYSEILDKYFKSFDNGDSHLDSSEFLKFVEQNETA). A Phosphoserine modification is found at Ser-163. Asn-173 and Asn-178 each carry an N-linked (GlcNAc...) asparagine glycan. One can recognise an EF-hand 2 domain in the interval 191 to 226 (LRSLCVDALIELSDENADWKLSFQEFLKCLNPSFNP). Residues 231–285 (CALEDETYADGAETEVDCNRCVCSCGHWVCTAMTCDGKNQKGVQTHTEEEKTGYV) enclose the VWFC domain.

Homodimer. Interacts with SCN10A. Interacts with DIP2A; DIP2A may act as a cell surface receptor for FSTL1. Interacts with BMP4. Interacts with CD14; this interaction promotes TL4-mediated signaling cascade. During central nervous system development, strongly expressed in the telencephalon, diencephalon, brainstem, limbic system and spinal cord. Widely expressed in all organs.

The protein resides in the secreted. Its function is as follows. Secreted glycoprotein that is involved in various physiological processes, such as angiogenesis, regulation of the immune response, cell proliferation and differentiation. Plays a role in the development of the central nervous system, skeletal system, lungs, and ureter. Promotes endothelial cell survival, migration and differentiation into network structures in an AKT-dependent manner. Also promotes survival of cardiac myocytes. Initiates various signaling cascades by activating different receptors on the cell surface such as DIP2A, TLR4 or BMP receptors. The polypeptide is Follistatin-related protein 1 (Fstl1) (Mus musculus (Mouse)).